A 426-amino-acid chain; its full sequence is Transcriptional enhancer factor TEF-1 (426 aa).

M1 is subject to N-acetylmethionine. Polar residues predominate over residues M1–P12. The disordered stretch occupies residues M1–A31. At S11 the chain carries Phosphoserine. Basic and acidic residues predominate over residues N15–D28. Positions D28 to D104 form a DNA-binding region, TEA. The residue at position 108 (K108) is an N6-lactoyllysine. Positions G167–D426 are transcriptional activation.

As to quaternary structure, interacts with YAP1 and WWTR1/TAZ. In terms of processing, lactylation by AARS1 promotes nuclear localization and stabilization of YAP1, leading to increased Hippo signaling pathway. Delactylated by SIRT1. As to expression, in developing skeletal muscle and myocardium, in mitotic neuroblasts both in the brain and spinal cord. At later stages of embryogenesis expressed in several developing structures such as the olfactory system, the intestine, and the kidney.

The protein resides in the nucleus. Its function is as follows. Transcription factor which plays a key role in the Hippo signaling pathway, a pathway involved in organ size control and tumor suppression by restricting proliferation and promoting apoptosis. The core of this pathway is composed of a kinase cascade wherein MST1/MST2, in complex with its regulatory protein SAV1, phosphorylates and activates LATS1/2 in complex with its regulatory protein MOB1, which in turn phosphorylates and inactivates YAP1 oncoprotein and WWTR1/TAZ. Acts by mediating gene expression of YAP1 and WWTR1/TAZ, thereby regulating cell proliferation, migration and epithelial mesenchymal transition (EMT) induction. Binds specifically and cooperatively to the SPH and GT-IIC 'enhansons' (5'-GTGGAATGT-3') and activates transcription in vivo in a cell-specific manner. The activation function appears to be mediated by a limiting cell-specific transcriptional intermediary factor (TIF). Involved in cardiac development. Binds to the M-CAT motif. In Mus musculus (Mouse), this protein is Transcriptional enhancer factor TEF-1 (Tead1).